A 441-amino-acid polypeptide reads, in one-letter code: MTTTRFAPSPTGYIHVGNLRTALMNYLIARKAGGTFILRIDDTDPERSKEEYVDAIKQDLEWLGITWDKVERQSERLDRYAEAADKLREIGRFYEAFETPTELDLKRKKQLNMGKPPVYDRAALALSDAEKESLRAERGNGVWRFKLDQERIEWTDGILGDISIDAASVSDPVLIRGDGQVLYTIASVVDDTDMGVTHVVRGSDHVTNTATQIQIMAALGHGHPEFAHHSLLTGPQGEALSKRLGTLALRDLREAGVKPMALLSLMARLGSSDPVELRTDMAELVDGFDINRFGSAPTKFDAEDLYPLTARYLQTLPVATVKSELDAIGVPADTQEAFWAVAKENITTLKDLEGWWILCRDGAEPLIADEDKEFIAEAMTLLPEGPYDSESWGKWTAAVKEKTGRKGKGLFMPLRKAVTGMERGPDMSALLALMQTVRARG.

The short motif at 8–18 (PSPTGYIHVGN) is the 'HIGH' region element. The 'KMSKS' region motif lies at 239–243 (ALSKR). ATP is bound at residue Lys242.

It belongs to the class-I aminoacyl-tRNA synthetase family. Glutamate--tRNA ligase type 1 subfamily. Monomer.

It localises to the cytoplasm. It catalyses the reaction tRNA(Glu) + L-glutamate + ATP = L-glutamyl-tRNA(Glu) + AMP + diphosphate. In terms of biological role, catalyzes the attachment of glutamate to tRNA(Glu) in a two-step reaction: glutamate is first activated by ATP to form Glu-AMP and then transferred to the acceptor end of tRNA(Glu). In Ruegeria sp. (strain TM1040) (Silicibacter sp.), this protein is Glutamate--tRNA ligase 2.